The primary structure comprises 209 residues: Outer-membrane lipoprotein LolB (209 aa).

An N-terminal signal peptide occupies residues 1–21 (MNNMKTFKFLTALFATAILTA). A lipid anchor (N-palmitoyl cysteine) is attached at cysteine 22. Residue cysteine 22 is the site of S-diacylglycerol cysteine attachment.

The protein belongs to the LolB family. Monomer.

The protein resides in the cell outer membrane. Its function is as follows. Plays a critical role in the incorporation of lipoproteins in the outer membrane after they are released by the LolA protein. In Haemophilus influenzae (strain 86-028NP), this protein is Outer-membrane lipoprotein LolB.